Consider the following 164-residue polypeptide: Protein SprT (164 aa).

In terms of domain architecture, SprT-like spans 14-156 (QLAESFFKRP…LCRRCRNTLV (143 aa)). Residue His69 participates in Zn(2+) binding. Glu70 is an active-site residue. A Zn(2+)-binding site is contributed by His73.

The protein belongs to the SprT family. Requires Zn(2+) as cofactor.

It is found in the cytoplasm. This is Protein SprT from Pseudomonas fluorescens (strain Pf0-1).